A 305-amino-acid chain; its full sequence is Taste receptor type 2 member 13 (305 aa).

Residues 1-7 lie on the Extracellular side of the membrane; the sequence is MGSSLYD. Residues 8–28 traverse the membrane as a helical segment; the sequence is ILTIVMIAEFIFGNVTNGFIV. Over 29 to 42 the chain is Cytoplasmic; that stretch reads LTNCIAWLSKRTLS. A helical transmembrane segment spans residues 43-63; it reads FIGWIQLFLAISRVVLIWEML. Residues 64–88 are Extracellular-facing; the sequence is LAWLKYMKYSFSYLAGTELRVMMLT. The helical transmembrane segment at 89–109 threads the bilayer; sequence WVVSNHFSLWLATILSIFYLL. Topologically, residues 110–128 are cytoplasmic; that stretch reads KIASFSRPVFLYLKWRVKK. Residues 129–149 traverse the membrane as a helical segment; it reads VLLLILLGNLIFLMFNILQIN. Residues 150 to 182 are Extracellular-facing; it reads THIEDWMDQYKRNITWDSRVNEFVGFSNLVLLE. The N-linked (GlcNAc...) asparagine glycan is linked to asparagine 162. Residues 183–203 traverse the membrane as a helical segment; sequence MIMFSVTPFTVALVSFILLIF. Residues 204-232 lie on the Cytoplasmic side of the membrane; the sequence is SLWKHLQKMHLSSRGERDPSTKAHVNALR. A helical transmembrane segment spans residues 233 to 253; the sequence is IMVSFLLLYATYFISFFISLI. Residues 254 to 262 are Extracellular-facing; it reads PMAHKKGLD. The helical transmembrane segment at 263–283 threads the bilayer; the sequence is LMFSLTVGLFYPSSHSFILIL. Residues 284–305 are Cytoplasmic-facing; sequence GHSNLRHSSCLVITYLRCKEKD.

It belongs to the G-protein coupled receptor T2R family. In terms of tissue distribution, expressed in subsets of taste receptor cells of the tongue and palate epithelium and exclusively in gustducin-positive cells. Expressed in 15% taste bud cells in circumvallate and foliate papillae but only in 2% in fungiform papillae. Expressed in the duodenum, antrum and fundus (part of the stomach).

It localises to the membrane. Receptor that may play a role in the perception of bitterness and is gustducin-linked. May play a role in sensing the chemical composition of the gastrointestinal content. The activity of this receptor may stimulate alpha gustducin, mediate PLC-beta-2 activation and lead to the gating of TRPM5. This is Taste receptor type 2 member 13 (Tas2r13) from Rattus norvegicus (Rat).